Consider the following 772-residue polypeptide: Larval serum protein 1 gamma chain (772 aa).

The N-terminal stretch at 1 to 16 is a signal peptide; it reads MKLTLVILALVACVTA. Asn-242 is a glycosylation site (N-linked (GlcNAc...) asparagine).

This sequence belongs to the hemocyanin family. In terms of assembly, heterohexamer, composed of three subunits, alpha, beta and gamma. In terms of tissue distribution, larval hemolymph.

The protein resides in the secreted. It is found in the extracellular space. Its function is as follows. Larval storage protein (LSP) which may serve as a store of amino acids for synthesis of adult proteins. In Drosophila melanogaster (Fruit fly), this protein is Larval serum protein 1 gamma chain (Lsp1gamma).